The chain runs to 609 residues: UvrABC system protein C (609 aa).

The GIY-YIG domain maps to 19 to 97 (ASPGCYLWKS…IKKHNPRFNV (79 aa)). The 36-residue stretch at 208 to 243 (ESLVSDLNIKMSNASERLDFEKAARYRDMLQRIQNF) folds into the UVR domain.

The protein belongs to the UvrC family. As to quaternary structure, interacts with UvrB in an incision complex.

The protein localises to the cytoplasm. The UvrABC repair system catalyzes the recognition and processing of DNA lesions. UvrC both incises the 5' and 3' sides of the lesion. The N-terminal half is responsible for the 3' incision and the C-terminal half is responsible for the 5' incision. This is UvrABC system protein C from Leptospira interrogans serogroup Icterohaemorrhagiae serovar copenhageni (strain Fiocruz L1-130).